The following is a 731-amino-acid chain: MAFHMPLKELQPVDTSLPEHVVKGAVVIDKEFTIWNHRAVIPSNALHTVFITINLLEQKLTDVVKMAARSMNLSEDDSYGLMADKPKRFITDDNLNSLGSGFILTLCASPDHYVKRITEILTEGNNISQMENAVKTLDEFSLDPALIEAFYRCSSLELLFSLIRDDRVCMSSTLLSTCLRALSSMLELAVGDFTWKSVPNDVVVSMASLVTGKAKREEANTLLAALQMLEQLVIGDDTTRDWILEEVPIETLIRHVEKSDERIALCALSLMNSMIRRCPDDEKRFELIKSLEVVPFRNAVHSSLLRGGGGVRNLNAIEQLVEVQRSLISAYETSPPTDAEVQKILDIESSEDVSEEIREMWKSQIGEHRCGRLAAISMVQFAEKSPQDLRMLISENTMRIEGGKWQLIPMWMRCCDIAAELFRVIPGRDELDRLIVVLFSTETPFPAVFACIVHLFHRTWREMQAKGGEMEKVACVVLEQLRHVLKRREIQDVEELSADLETFSYRAMQEIWREEQLGKENIQLHSEAVIQLKSKLRPKMEELVRINHLNYLKLGAVFRKPQKSKSLAKLAFWHWKLDASEKMLTITGCDGENYVEGVQRDDIRQVWIKDIADVTNNDEIDRKASSSRFTSSPSTQMLRGIRVQLKTTNDMKEGEVLMALTSDETQSVIWLEGLAELIGSKAVKSETDAMVERMLKMELRVRLLNVKLTNPEEKPEIPPIPDDIKSFISKF.

The 147-residue stretch at 339–485 (AEVQKILDIE…VVLEQLRHVL (147 aa)) folds into the ELMO domain. The PH domain maps to 544–679 (VRINHLNYLK…WLEGLAELIG (136 aa)). An SH3-binding motif is present at residues 715 to 718 (PEIP).

Interacts with psr-1. Forms a ternary complex with ced-2 and ced-5.

It is found in the cytoplasm. In terms of biological role, involved in programmed apoptosis and necrosis. Required for the cell corpse engulfment process. Has roles in the formation of actin halos and distal tip cell migration. Negatively regulates the unc-6/Netrin receptor unc-5 to control distal tip cell migration along the anterior-posterior axis of the body. Plays no role in amphid axon outgrowth. The protein is Cell death abnormality protein 12 of Caenorhabditis elegans.